A 447-amino-acid chain; its full sequence is GTPase Der (447 aa).

EngA-type G domains are found at residues 3-167 (PVIA…FAER) and 181-354 (TRIA…AAAM). GTP contacts are provided by residues 9 to 16 (GRPNVGKS), 56 to 60 (DTGGF), 119 to 122 (NKAE), 187 to 194 (GRPNVGKS), 234 to 238 (DTAGL), and 299 to 302 (NKWD). Residues 355 to 439 (VKLPTPKLTR…PLRIEFRTNK (85 aa)) form the KH-like domain.

The protein belongs to the TRAFAC class TrmE-Era-EngA-EngB-Septin-like GTPase superfamily. EngA (Der) GTPase family. In terms of assembly, associates with the 50S ribosomal subunit.

Functionally, GTPase that plays an essential role in the late steps of ribosome biogenesis. The chain is GTPase Der from Ralstonia nicotianae (strain ATCC BAA-1114 / GMI1000) (Ralstonia solanacearum).